Consider the following 234-residue polypeptide: UPF0104 membrane protein MJ1078 (234 aa).

5 helical membrane-spanning segments follow: residues 32–52 (VGTV…LLFI), 70–90 (IKWG…FLIV), 123–143 (LITL…FIFL), 164–184 (LTAI…LIYI), and 198–218 (VLIL…AIMF).

This sequence belongs to the UPF0104 family.

Its subcellular location is the cell membrane. This chain is UPF0104 membrane protein MJ1078, found in Methanocaldococcus jannaschii (strain ATCC 43067 / DSM 2661 / JAL-1 / JCM 10045 / NBRC 100440) (Methanococcus jannaschii).